Consider the following 455-residue polypeptide: Angiopoietin-related protein 3 (455 aa).

A signal peptide spans Met1–Ala16. The sufficient to inhibit LPL lipase activity stretch occupies residues Ser17 to Lys165. The sufficient to inhibit LIPG/EL phospholipase activity stretch occupies residues Ser17–Gly207. The tract at residues Glu32 to Gly56 is required for inhibition of LPL lipase activity. The stretch at Leu85–Thr206 forms a coiled coil. The N-linked (GlcNAc...) asparagine glycan is linked to Asn115. The segment at Gln202 to Leu242 is disordered. The segment covering Gln209–Ser220 has biased composition (polar residues). Thr226 carries an O-linked (GlcNAc) threonine glycan. N-linked (GlcNAc...) asparagine glycosylation occurs at Asn232. The Fibrinogen C-terminal domain occupies Thr237–Thr455. Cysteines 246 and 274 form a disulfide. Residues Asn296 and Asn357 are each glycosylated (N-linked (GlcNAc...) asparagine). Cys394 and Cys408 are disulfide-bonded.

Interacts with ANGPTL8. Interacts with ITGB3. In part proteolytically cleaved by proprotein convertases; proposed to be involved in activation. In primary hepatocytes is intracellularily predominantly processed by FURIN and extracellularily by FURIN and PCSK6/PACE4. In 18.5 dpc embryos 75% of protein is found to be processed compared to 25 % in adults. As to expression, predominantly expressed in liver, weakly expressed in kidney and lung. Expressed in podocytes (at protein level). Expressed in hypothalamic neurons (at protein level). Expressed in bone marrow sinusoidal endothelial cells (at protein level).

Its subcellular location is the secreted. The protein resides in the cell projection. It localises to the lamellipodium. In terms of biological role, acts in part as a hepatokine that is involved in regulation of lipid and glucose metabolism. Proposed to play a role in the trafficking of energy substrates to either storage or oxidative tissues in response to food intake. Has a stimulatory effect on plasma triglycerides (TG), which is achieved by suppressing plasma TG clearance via inhibition of LPL activity; the function seems to be specific for the feeding conditions. The inhibition of LPL activity appears to be an indirect mechanism involving recruitment of proprotein convertases PCSK6 and FURIN to LPL leading to cleavage and dissociation of LPL from the cell surface; the function does not require ANGPTL3 proteolytic cleavage but seems to be mediated by the N-terminal domain, and is not inhibited by GPIHBP1. Can inhibit endothelial lipase, causing increased plasma levels of high density lipoprotein (HDL) cholesterol and phospholipids; the cleaved N-terminal domain is more efficient than the uncleaved proprotein. Can bind to adipocytes to activate lipolysis, releasing free fatty acids and glycerol. Suppresses LPL specifically in oxidative tissues which is required to route very low density lipoprotein (VLDL)-TG to white adipose tissue (WAT) for storage in response to food; the function may involve cooperation with circulating, liver-derived ANGPTL8 and ANGPTL4 expression in WAT. Contributes to lower plasma levels of low density lipoprotein (LDL)-cholesterol by a mechanism that is independent of the canonical pathway implicating APOE and LDLR. May stimulate hypothalamic LPL activity. Its function is as follows. Involved in angiogenesis. Binds to endothelial cells via integrin alpha-V/beta-3 (ITGAV:ITGB3), activates FAK, MAPK and Akt signaling pathways and induces cell adhesion and cell migration. May increase the motility of podocytes. Secreted from podocytes, may modulate properties of glomerular endothelial cells involving integrin alpha-V/beta-3 and Akt signaling. May induce actin filament rearrangements in podocytes implicating integrin alpha-V/beta-3 and Rac1 activation. Binds to hematopoietic stem cells (HSC) and is involved in the regulation of HSC activity probably implicating down-regulation of IKZF1/IKAROS. The polypeptide is Angiopoietin-related protein 3 (Angptl3) (Mus musculus (Mouse)).